The following is a 210-amino-acid chain: Fibrillarin-like rRNA/tRNA 2'-O-methyltransferase (210 aa).

S-adenosyl-L-methionine-binding positions include threonine 72–threonine 73, glutamate 88–phenylalanine 89, aspartate 113–alanine 114, and aspartate 134–threonine 137.

Belongs to the methyltransferase superfamily. Fibrillarin family. As to quaternary structure, interacts with nop5. Component of box C/D small ribonucleoprotein (sRNP) particles that contain rpl7ae, FlpA and nop5, plus a guide RNA.

In terms of biological role, involved in pre-rRNA and tRNA processing. Utilizes the methyl donor S-adenosyl-L-methionine to catalyze the site-specific 2'-hydroxyl methylation of ribose moieties in rRNA and tRNA. Site specificity is provided by a guide RNA that base pairs with the substrate. Methylation occurs at a characteristic distance from the sequence involved in base pairing with the guide RNA. This Halobacterium salinarum (strain ATCC 29341 / DSM 671 / R1) protein is Fibrillarin-like rRNA/tRNA 2'-O-methyltransferase.